Reading from the N-terminus, the 142-residue chain is Transcription antitermination protein NusB (142 aa).

This sequence belongs to the NusB family.

Its function is as follows. Involved in transcription antitermination. Required for transcription of ribosomal RNA (rRNA) genes. Binds specifically to the boxA antiterminator sequence of the ribosomal RNA (rrn) operons. In Thermotoga sp. (strain RQ2), this protein is Transcription antitermination protein NusB.